The chain runs to 580 residues: Serine/threonine-protein kinase PINK1, mitochondrial (580 aa).

A mitochondrion-targeting transit peptide spans 1 to 77; it reads MAVRQALGRG…RFFRQSVAGL (77 aa). The disordered stretch occupies residues 28–60; it reads VSGWGKPGPGAAWGRGERPGRVSSPGAQPRPLG. The chain crosses the membrane as a helical span at residues 94 to 110; it reads GPCGRAVFLAFGLGLGL. Residues 111 to 117 form a required for outer membrane localization region; that stretch reads IEEKQAE. In terms of domain architecture, Protein kinase spans 156–510; the sequence is YLIGQAIGKG…IAANVLHLSL (355 aa). ATP is bound by residues 162–170 and Lys-218; that span reads IGKGCNAAV. Ser-227 carries the phosphoserine; by autocatalysis modification. The active-site Proton acceptor is the Asp-361. Position 401 is a phosphoserine; by autocatalysis (Ser-401).

Belongs to the protein kinase superfamily. Ser/Thr protein kinase family. In terms of assembly, upon mitochondrial depolarization, it forms a supercomplex with TOM and TIM23 complexes. PINK1-TOM-TIM23 supercomplex formation requires PINK1 interaction with TOMM20 and TOMM70 and is critical for PINK1 stabilization at the outer mitochondrial membrane, kinase activation and downstream mitophagy. Upon mitochondrial depolarization, interacts with TIMM23; the interaction is required for PINK1 accumulation at the outer mitochondrial membrane, kinase activation by autophosphorylation and PRKN recruitement to mitochondria. Interacts with PRKN. Interacts with FBXO7. Forms a complex with PRKN and PARK7. Interacts with NENF. The cofactor is Mg(2+). Proteolytically cleaved. In healthy cells, the precursor is continuously imported into the inner mitochondrial membrane (IMM), where it is proteolytically cleaved by mitochondrial-processing peptidase (MPP) and then undergoes further proteolytic cleavage by PARL or AFG3L2 to give rise to the 52 kDa short form. The 52 kDa short form is then released into the cytosol where it rapidly undergoes proteasome-dependent degradation. In unhealthy cells, when cellular stress conditions lead to the loss of mitochondrial membrane potential, mitochondrial import is impaired leading to the precursor accumulating on the outer mitochondrial membrane (OMM). If accumulation at the OMM fails and it is imported into the depolarized mitochondria, it undergoes cleavage by the IMM protease OMA1, promoting its subsequent degradation by the proteasome. Post-translationally, autophosphorylated. Loss of mitochondrial membrane potential results in the precursor accumulating on the outer mitochondrial membrane (OMM) where it is activated by autophosphorylation. Autophosphorylation at Ser-227 and Ser-401 is sufficient and essential for selective recruitment of PRKN to depolarized mitochondria, via PINK1-dependent phosphorylation of ubiquitin and maybe PRKN.

It localises to the mitochondrion outer membrane. The protein localises to the mitochondrion inner membrane. Its subcellular location is the cytoplasm. The protein resides in the cytosol. The catalysed reaction is L-seryl-[protein] + ATP = O-phospho-L-seryl-[protein] + ADP + H(+). It carries out the reaction L-threonyl-[protein] + ATP = O-phospho-L-threonyl-[protein] + ADP + H(+). Its function is as follows. Serine/threonine-protein kinase which acts as a sensor of mitochondrial damage and protects against mitochondrial dysfunction during cellular stress. It phosphorylates mitochondrial proteins to coordinate mitochondrial quality control mechanisms that remove and replace dysfunctional mitochondrial components. Depending on the severity of mitochondrial damage, activity ranges from preventing apoptosis and stimulating mitochondrial biogenesis to eliminating severely damaged mitochondria via PINK1-PRKN-dependent mitophagy. When cellular stress results in irreversible mitochondrial damage, PINK1 accumulates at the outer mitochondrial membrane (OMM) where it phosphorylates pre-existing polyubiquitin chains at 'Ser-65', recruits PRKN from the cytosol to the OMM and activates PRKN by phosphorylation at 'Ser-65'; activated PRKN then ubiquinates VDAC1 and other OMM proteins to initiate mitophagy. The PINK1-PRKN pathway also promotes fission of damaged mitochondria through phosphorylation and PRKN-dependent degradation of mitochondrial proteins involved in fission such as MFN2. This prevents the refusion of unhealthy mitochondria with the mitochondrial network or initiates mitochondrial fragmentation facilitating their later engulfment by autophagosomes. Also promotes mitochondrial fission independently of PRKN and ATG7-mediated mitophagy, via the phosphorylation and activation of DNM1L. Regulates motility of damaged mitochondria by promoting the ubiquitination and subsequent degradation of MIRO1 and MIRO2; in motor neurons, this likely inhibits mitochondrial intracellular anterograde transport along the axons which probably increases the chance of the mitochondria undergoing mitophagy in the soma. Required for ubiquinone reduction by mitochondrial complex I by mediating phosphorylation of complex I subunit NDUFA10. Phosphorylates LETM1, positively regulating its mitochondrial calcium transport activity. The chain is Serine/threonine-protein kinase PINK1, mitochondrial from Rattus norvegicus (Rat).